Consider the following 332-residue polypeptide: Homeobox protein DLX-2 (332 aa).

Residues 19–28 are compositionally biased toward polar residues; sequence ASSTYHQHQQ. The interval 19-83 is disordered; that stretch reads ASSTYHQHQQ…QHPAGGGGGG (65 aa). The span at 40-49 shows a compositional bias: low complexity; that stretch reads NSNSSSSNSS. Polar residues predominate over residues 55–75; it reads ESPTLPVSTATDSSYYTNQQH. Residues 155 to 214 constitute a DNA-binding region (homeobox); sequence VRKPRTIYSSFQLAALQRRFQKTQYLALPERAELAASLGLTQTQVKIWFQNRRSKFKKMW. 2 disordered regions span residues 219 to 272 and 304 to 332; these read IPTE…SSPS and PSQT…GTIF. Ser235 carries the phosphoserine modification. Positions 253 to 266 are enriched in gly residues; it reads AGGGPGSGGGGAGS. Positions 310 to 320 are enriched in basic residues; sequence AHHHHHHHHHA.

The protein belongs to the distal-less homeobox family. As to quaternary structure, interacts (via homeobox DNA-binding domain) with POU4F2; this interaction enhances retinal ganglion cell (RGC) differentiation. In terms of processing, phosphorylated by serine/threonine kinases. In terms of tissue distribution, expressed only in neural and other ectodermal structures of the head: the brain, the vomeronasal organ, and the preameloblasts of the teeth. Primarily expressed in the germinal cells of the ventral forebrain in the midgestational embryo, and in both dorsal and ventral ventricular zones in late embryogenesis and early postnatal life. Expressed in the inner nuclear layer of the retina.

It localises to the nucleus. Functionally, acts as a transcriptional activator. Activates transcription of CGA/alpha-GSU, via binding to the downstream activin regulatory element (DARE) in the gene promoter. Plays a role in terminal differentiation of interneurons, such as amacrine and bipolar cells in the developing retina. Likely to play a regulatory role in the development of the ventral forebrain. May play a role in craniofacial patterning and morphogenesis. This Mus musculus (Mouse) protein is Homeobox protein DLX-2 (Dlx2).